The primary structure comprises 76 residues: Exodeoxyribonuclease 7 small subunit (76 aa).

It belongs to the XseB family. In terms of assembly, heterooligomer composed of large and small subunits.

The protein localises to the cytoplasm. The enzyme catalyses Exonucleolytic cleavage in either 5'- to 3'- or 3'- to 5'-direction to yield nucleoside 5'-phosphates.. In terms of biological role, bidirectionally degrades single-stranded DNA into large acid-insoluble oligonucleotides, which are then degraded further into small acid-soluble oligonucleotides. In Staphylococcus aureus (strain MRSA252), this protein is Exodeoxyribonuclease 7 small subunit.